Reading from the N-terminus, the 1451-residue chain is Murinoglobulin-2 (1451 aa).

Residues 1 to 27 (MWKSRRAQLCLFSVLLAFLPSASSLNG) form the signal peptide. 3 disulfide bridges follow: cysteine 48–cysteine 86, cysteine 251–cysteine 276, and cysteine 269–cysteine 288. Asparagine 55 is a glycosylation site (N-linked (GlcNAc...) asparagine). Residues asparagine 294, asparagine 313, and asparagine 500 are each glycosylated (N-linked (GlcNAc...) asparagine). Cystine bridges form between cysteine 461/cysteine 555, cysteine 587/cysteine 773, and cysteine 634/cysteine 680. Residues 677–734 (PKICFDSAPMSGPRGKFDLAFSSEVSGTLQKGSSKRPQPEEPPREDPPPKDPLAETIR) form a bait region region. Residues 703–728 (GTLQKGSSKRPQPEEPPREDPPPKDP) form a disordered region. Basic and acidic residues predominate over residues 713–728 (PQPEEPPREDPPPKDP). 3 N-linked (GlcNAc...) asparagine glycosylation sites follow: asparagine 749, asparagine 776, and asparagine 871. 4 disulfide bridges follow: cysteine 849–cysteine 885, cysteine 923–cysteine 1274, cysteine 1081–cysteine 1104, and cysteine 1298–cysteine 1444. Residues 974-977 (CGEQ) constitute a cross-link (isoglutamyl cysteine thioester (Cys-Gln)). Residue asparagine 1401 is glycosylated (N-linked (GlcNAc...) asparagine).

The protein belongs to the protease inhibitor I39 (alpha-2-macroglobulin) family. As to quaternary structure, monomer. In terms of tissue distribution, plasma.

Its subcellular location is the secreted. Functionally, a proteinase activates the inhibitor by specific proteolysis in the bait region, which, by an unknown mechanism leads to reaction at the cysteinyl-glutamyl internal thiol ester site and to a conformational change, whereby the proteinase is trapped and/or covalently bound to the inhibitor. While in the tetrameric proteinase inhibitors steric inhibition is sufficiently strong, monomeric forms need a covalent linkage between the activated glutamyl residue of the original thiol ester and a terminal amino group of a lysine or another nucleophilic group on the proteinase, for inhibition to be effective. The sequence is that of Murinoglobulin-2 (Mug2) from Mus musculus (Mouse).